The primary structure comprises 475 residues: UDP-N-acetylmuramate--L-alanine ligase (475 aa).

An ATP-binding site is contributed by 121 to 127; it reads GTHGKTT.

This sequence belongs to the MurCDEF family.

The protein resides in the cytoplasm. The catalysed reaction is UDP-N-acetyl-alpha-D-muramate + L-alanine + ATP = UDP-N-acetyl-alpha-D-muramoyl-L-alanine + ADP + phosphate + H(+). It functions in the pathway cell wall biogenesis; peptidoglycan biosynthesis. Cell wall formation. This chain is UDP-N-acetylmuramate--L-alanine ligase, found in Salinibacter ruber (strain DSM 13855 / M31).